The chain runs to 874 residues: Probable inorganic carbon transporter subunit DabA (874 aa).

Positions 398, 400, 580, and 595 each coordinate Zn(2+).

The protein belongs to the inorganic carbon transporter (TC 9.A.2) DabA family. In terms of assembly, forms a complex with DabB. Requires Zn(2+) as cofactor.

It is found in the cell membrane. In terms of biological role, part of an energy-coupled inorganic carbon pump. The polypeptide is Probable inorganic carbon transporter subunit DabA (Bacillus cereus (strain Q1)).